The sequence spans 492 residues: Phosphatidylglycerol--prolipoprotein diacylglyceryl transferase (492 aa).

The next 9 helical transmembrane spans lie at 40–60 (IFGIGWALLFLLIAVLAYVGW), 72–92 (AIRQIAGFAVMAAVILVVVVP), 106–126 (VAVRGYGMFLMLAAIASVGLA), 133–153 (AGLGADSILQLAPWTFIGGLL), 184–204 (QGGLVVYGGFIGGFIASLIAL), 214–234 (IGDVIIPCVFVGLLFGRLGCL), 361–381 (VWGTQIISSVFAAIMFVVLLI), 409–429 (GVLMLVGFIAYGVLRIVLEWI), and 441–461 (LSISQWVSLVVIAASLVTLFI). Position 230 (arginine 230) interacts with a 1,2-diacyl-sn-glycero-3-phospho-(1'-sn-glycerol).

This sequence belongs to the Lgt family.

The protein localises to the cell inner membrane. The enzyme catalyses L-cysteinyl-[prolipoprotein] + a 1,2-diacyl-sn-glycero-3-phospho-(1'-sn-glycerol) = an S-1,2-diacyl-sn-glyceryl-L-cysteinyl-[prolipoprotein] + sn-glycerol 1-phosphate + H(+). The protein operates within protein modification; lipoprotein biosynthesis (diacylglyceryl transfer). Functionally, catalyzes the transfer of the diacylglyceryl group from phosphatidylglycerol to the sulfhydryl group of the N-terminal cysteine of a prolipoprotein, the first step in the formation of mature lipoproteins. The protein is Phosphatidylglycerol--prolipoprotein diacylglyceryl transferase of Rhodopirellula baltica (strain DSM 10527 / NCIMB 13988 / SH1).